Reading from the N-terminus, the 291-residue chain is Acetylglutamate kinase (291 aa).

Residues 61–62 (GG), Arg-83, and Asn-187 each bind substrate.

This sequence belongs to the acetylglutamate kinase family. ArgB subfamily.

The protein resides in the cytoplasm. It carries out the reaction N-acetyl-L-glutamate + ATP = N-acetyl-L-glutamyl 5-phosphate + ADP. The protein operates within amino-acid biosynthesis; L-arginine biosynthesis; N(2)-acetyl-L-ornithine from L-glutamate: step 2/4. Functionally, catalyzes the ATP-dependent phosphorylation of N-acetyl-L-glutamate. This Methanoregula boonei (strain DSM 21154 / JCM 14090 / 6A8) protein is Acetylglutamate kinase.